The chain runs to 1525 residues: Multidrug resistance protein mrp-7 (1525 aa).

Over 1-24 (MLSSFCGDGHPFSTGLPNVSICAQ) the chain is Extracellular. The N-linked (GlcNAc...) asparagine glycan is linked to Asn-18. Residues 25-45 (HTVLVWVPAAFFLLTLPFLSA) traverse the membrane as a helical segment. Residues 46 to 66 (QCHLTAQRFARLPFSAHFIIK) lie on the Cytoplasmic side of the membrane. A helical membrane pass occupies residues 67–87 (LLLVAFLAANSLATWCYVLFS). The Extracellular segment spans residues 88 to 94 (KNSYAAA). Residues 95–115 (YYVYPGLWVLVWTGTFLVHLI) traverse the membrane as a helical segment. At 116 to 118 (RLR) the chain is on the cytoplasmic side. Residues 119-139 (CGLVSSGIQHVTSLIFLLCGA) form a helical membrane-spanning segment. Topologically, residues 140-165 (PEFYQWIRMENSNSFPNDLTTTDSAQ) are extracellular. Residues 166–186 (FLSIAYLSWYSALILYTFSLC) traverse the membrane as a helical segment. At 187–346 (FADPRGAKTD…APFWKGMALS (160 aa)) the chain is on the cytoplasmic side. An ABC transmembrane type-1 1 domain is found at 305 to 587 (LLASTLKFVS…IALLINQAVQ (283 aa)). The chain crosses the membrane as a helical span at residues 347-367 (ILMFSVSELRSLILNGYFYIM). Topologically, residues 368-434 (FRMGTKIQTS…SCPYQITFAL (67 aa)) are extracellular. Residues 435-455 (VYLFITLGYSALPGVVIMVIF) traverse the membrane as a helical segment. Residues 456-535 (VPMNIISSMI…NILDSFNTAS (80 aa)) lie on the Cytoplasmic side of the membrane. Residues 536–556 (PFLVALFSFGTFVLSNPSHLL) form a helical membrane-spanning segment. Residues 557-561 (TPQIA) lie on the Extracellular side of the membrane. Residues 562 to 582 (FVSLALFNQLRSPMTMIALLI) traverse the membrane as a helical segment. Over 583 to 953 (NQAVQAVVSN…ATYQLYVKAA (371 aa)) the chain is Cytoplasmic. The ABC transporter 1 domain occupies 622–849 (VRVENLTASW…RGLFFDFMEE (228 aa)). 659-666 (GKVGSGKS) contacts ATP. Positions 900–925 (ELTTQISTMSSPEKPPTGTSPAAATE) are disordered. The chain crosses the membrane as a helical span at residues 954 to 974 (GYLLSIAFIGFFIVYMTLQIL). In terms of domain architecture, ABC transmembrane type-1 2 spans 959–1245 (IAFIGFFIVY…AVRQVSEIEA (287 aa)). Residues 975-1005 (RSFWLSAWSDEYDPDSPSAHPMAKGWRLGVY) are Extracellular-facing. Residues 1006–1026 (GALGFSETACFFVALLALVFV) traverse the membrane as a helical segment. Residues 1027–1068 (GQRASKNLHGPLIHNLMRSPMSFYDTTPLGRILNRCAKDIET) lie on the Cytoplasmic side of the membrane. A helical membrane pass occupies residues 1069–1089 (IDMMLPMNFRYLVMCVLQVAF). Position 1090 (Thr-1090) is a topological domain, extracellular. Residues 1091 to 1111 (LIVIIISTPLFAVVILPLALI) form a helical membrane-spanning segment. The Cytoplasmic segment spans residues 1112–1184 (YLIFLRYYVP…RYSSLVSNRW (73 aa)). The chain crosses the membrane as a helical span at residues 1185-1205 (LAVRLEFVGNCIIFFAALFAV). The Extracellular segment spans residues 1206 to 1525 (LSKEFGWITS…ADAAEQDKHE (320 aa)). An N-linked (GlcNAc...) asparagine glycan is attached at Asn-1228. One can recognise an ABC transporter 2 domain in the interval 1282-1516 (VKFDGYSTRY…KNSAFAKMVA (235 aa)). 1316-1323 (GRTGAGKS) is an ATP binding site. Asn-1358 and Asn-1418 each carry an N-linked (GlcNAc...) asparagine glycan.

It belongs to the ABC transporter superfamily. ABCC family. Conjugate transporter (TC 3.A.1.208) subfamily. Expressed in head neurons, including the dopamine (DA) motor neuron, and other cells in the body.

The protein localises to the cell membrane. Functionally, negatively regulates cellular toxicity by mediating the export of environmental toxicants such as methylmercury out of the cell. Plays a role in inhibiting methylmercury-induced dopamine (DA) motor neuron degeneration. Not involved in Mn(2+)- or Al(3+)-associated toxicity. This Caenorhabditis elegans protein is Multidrug resistance protein mrp-7.